The following is a 371-amino-acid chain: Histidinol-phosphate aminotransferase (371 aa).

Lys227 carries the N6-(pyridoxal phosphate)lysine modification.

Belongs to the class-II pyridoxal-phosphate-dependent aminotransferase family. Histidinol-phosphate aminotransferase subfamily. In terms of assembly, homodimer. Pyridoxal 5'-phosphate serves as cofactor.

The catalysed reaction is L-histidinol phosphate + 2-oxoglutarate = 3-(imidazol-4-yl)-2-oxopropyl phosphate + L-glutamate. It participates in amino-acid biosynthesis; L-histidine biosynthesis; L-histidine from 5-phospho-alpha-D-ribose 1-diphosphate: step 7/9. This Sphingopyxis alaskensis (strain DSM 13593 / LMG 18877 / RB2256) (Sphingomonas alaskensis) protein is Histidinol-phosphate aminotransferase.